Consider the following 114-residue polypeptide: Transmembrane protein 14C (114 aa).

Helical transmembrane passes span 8 to 28 (LVPL…GGII), 33 to 53 (AGSV…GLGS), 62 to 82 (NIWL…MRFY), and 87 to 107 (FMPA…LGIS).

It localises to the mitochondrion membrane. Its function is as follows. Required for normal heme biosynthesis. This is Transmembrane protein 14C (TMEM14C) from Bos taurus (Bovine).